Reading from the N-terminus, the 507-residue chain is Branchpoint-bridging protein (507 aa).

Positions 84–93 (DLNPPTSRYR) are enriched in polar residues. The tract at residues 84–110 (DLNPPTSRYRSLSPPPVYDSQGKRTNT) is disordered. One can recognise a KH domain in the interval 154 to 220 (YIPINDYPEI…NMNEPLHCVI (67 aa)). CCHC-type zinc fingers lie at residues 272 to 289 (RPCP…ECSS) and 297 to 314 (VICQ…DCTS). A disordered region spans residues 307 to 507 (HAARDCTSPL…PPPPPPPPSS (201 aa)). Positions 319-336 (FGKRTSDGPEFRETKKLQ) are enriched in basic and acidic residues. Over residues 345 to 376 (PVGSHPSAPGSGSANSGVAPASLHPPGTMAPP) the composition is skewed to low complexity. 2 stretches are compositionally biased toward pro residues: residues 390–412 (TLPP…PVAL) and 440–449 (EGPPAPPQTA). The segment covering 450–469 (PPLRQTAATASSAGSSQSAQ) has biased composition (low complexity). Over residues 484–507 (PGPPAAVLPPPPPPPPPPPPPPSS) the composition is skewed to pro residues.

This sequence belongs to the BBP/SF1 family.

It localises to the nucleus. Necessary for the splicing of pre-mRNA. Has a role in the recognition of the branch site (5'-UACUAAC-3'), the pyrimidine tract and the 3'-splice site at the 3'-end of introns. This chain is Branchpoint-bridging protein (BBP), found in Eremothecium gossypii (strain ATCC 10895 / CBS 109.51 / FGSC 9923 / NRRL Y-1056) (Yeast).